The following is a 259-amino-acid chain: MIRNPFHLVEYSPWPLTGSLGAMFLTVGLTSWFHNHGFITMLLGLFLVLMTMFQWWRDIIRESTFQGYHTMKVSLGMRMGMVLFITSEICFFFAFFWAYFHSSLAPNTDIGASWPPLHINPLNPFQIPLLNTAILLASGVTVTWAHHSLMGGNHAEATQSMVLTVILGGYFTLLQAEEYMEAPFSIADSVYGATFFVATGFHGLHVIIGSVFLLICLFRMLIHHFSTNHHFGFEAAAWYWHFVDVVWLILYTCIYWWGS.

Transmembrane regions (helical) follow at residues 13–33, 36–56, 80–100, 125–145, 154–174, 195–215, and 237–257; these read PWPL…TSWF, HGFI…FQWW, GMVL…WAYF, FQIP…VTWA, HAEA…FTLL, FFVA…FLLI, and AWYW…IYWW.

It belongs to the cytochrome c oxidase subunit 3 family. In terms of assembly, component of the cytochrome c oxidase (complex IV, CIV), a multisubunit enzyme composed of a catalytic core of 3 subunits and several supernumerary subunits. The complex exists as a monomer or a dimer and forms supercomplexes (SCs) in the inner mitochondrial membrane with ubiquinol-cytochrome c oxidoreductase (cytochrome b-c1 complex, complex III, CIII).

It localises to the mitochondrion inner membrane. It carries out the reaction 4 Fe(II)-[cytochrome c] + O2 + 8 H(+)(in) = 4 Fe(III)-[cytochrome c] + 2 H2O + 4 H(+)(out). In terms of biological role, component of the cytochrome c oxidase, the last enzyme in the mitochondrial electron transport chain which drives oxidative phosphorylation. The respiratory chain contains 3 multisubunit complexes succinate dehydrogenase (complex II, CII), ubiquinol-cytochrome c oxidoreductase (cytochrome b-c1 complex, complex III, CIII) and cytochrome c oxidase (complex IV, CIV), that cooperate to transfer electrons derived from NADH and succinate to molecular oxygen, creating an electrochemical gradient over the inner membrane that drives transmembrane transport and the ATP synthase. Cytochrome c oxidase is the component of the respiratory chain that catalyzes the reduction of oxygen to water. Electrons originating from reduced cytochrome c in the intermembrane space (IMS) are transferred via the dinuclear copper A center (CU(A)) of subunit 2 and heme A of subunit 1 to the active site in subunit 1, a binuclear center (BNC) formed by heme A3 and copper B (CU(B)). The BNC reduces molecular oxygen to 2 water molecules using 4 electrons from cytochrome c in the IMS and 4 protons from the mitochondrial matrix. This chain is Cytochrome c oxidase subunit 3 (COIII), found in Heterololigo bleekeri (Spear squid).